We begin with the raw amino-acid sequence, 89 residues long: Pigment dispersing factor homolog pdf-2 (89 aa).

A signal peptide spans 1 to 27; the sequence is MSSRISVSLLLLAVVATMFFTANVVDA.

In terms of biological role, probable ligand of isoforms a and b of the calcitonin receptor-like protein, pdfr-1, a G-protein coupled receptor. May not signal through isoform c of pdfr-1. Involved in locomotion; may play a role in circadian rhythms of locomotor activity. Modulator of egg-laying. This is Pigment dispersing factor homolog pdf-2 from Caenorhabditis elegans.